We begin with the raw amino-acid sequence, 470 residues long: Ribulose bisphosphate carboxylase large chain (470 aa).

Substrate-binding residues include Asn-115 and Thr-165. Residue Lys-167 is the Proton acceptor of the active site. Lys-169 is a substrate binding site. Mg(2+) contacts are provided by Lys-193, Asp-195, and Glu-196. An N6-carboxylysine modification is found at Lys-193. The active-site Proton acceptor is His-286. The substrate site is built by Arg-287, His-319, and Ser-371.

It belongs to the RuBisCO large chain family. Type I subfamily. Heterohexadecamer of 8 large chains and 8 small chains. Mg(2+) is required as a cofactor.

It localises to the carboxysome. It catalyses the reaction 2 (2R)-3-phosphoglycerate + 2 H(+) = D-ribulose 1,5-bisphosphate + CO2 + H2O. The catalysed reaction is D-ribulose 1,5-bisphosphate + O2 = 2-phosphoglycolate + (2R)-3-phosphoglycerate + 2 H(+). In terms of biological role, ruBisCO catalyzes two reactions: the carboxylation of D-ribulose 1,5-bisphosphate, the primary event in carbon dioxide fixation, as well as the oxidative fragmentation of the pentose substrate in the photorespiration process. Both reactions occur simultaneously and in competition at the same active site. This Prochlorococcus marinus (strain SARG / CCMP1375 / SS120) protein is Ribulose bisphosphate carboxylase large chain.